Reading from the N-terminus, the 105-residue chain is Large ribosomal subunit protein uL24 (105 aa).

This sequence belongs to the universal ribosomal protein uL24 family. In terms of assembly, part of the 50S ribosomal subunit.

Functionally, one of two assembly initiator proteins, it binds directly to the 5'-end of the 23S rRNA, where it nucleates assembly of the 50S subunit. One of the proteins that surrounds the polypeptide exit tunnel on the outside of the subunit. This is Large ribosomal subunit protein uL24 from Pseudothermotoga lettingae (strain ATCC BAA-301 / DSM 14385 / NBRC 107922 / TMO) (Thermotoga lettingae).